A 236-amino-acid chain; its full sequence is uncharacterized protein (236 aa).

The 114-residue stretch at 3-116 folds into the Response regulatory domain; sequence TCLIVDDELF…RLSKTLKRVR (114 aa). Asp54 carries the post-translational modification 4-aspartylphosphate. In terms of domain architecture, HTH LytTR-type spans 135-235; the sequence is LPCYSGSKLK…LKSLKQLFGF (101 aa).

This is an uncharacterized protein from Shewanella oneidensis (strain ATCC 700550 / JCM 31522 / CIP 106686 / LMG 19005 / NCIMB 14063 / MR-1).